Reading from the N-terminus, the 194-residue chain is Protein GrpE (194 aa).

2 stretches are compositionally biased toward basic and acidic residues: residues 1 to 19 (MSKE…ENTS) and 26 to 44 (KKEA…NQKL). Residues 1–44 (MSKEEFPSEKNLDKEENTSKPKKAVKKEAAKGEETKKNNENQKL) form a disordered region.

This sequence belongs to the GrpE family. In terms of assembly, homodimer.

Its subcellular location is the cytoplasm. Its function is as follows. Participates actively in the response to hyperosmotic and heat shock by preventing the aggregation of stress-denatured proteins, in association with DnaK and GrpE. It is the nucleotide exchange factor for DnaK and may function as a thermosensor. Unfolded proteins bind initially to DnaJ; upon interaction with the DnaJ-bound protein, DnaK hydrolyzes its bound ATP, resulting in the formation of a stable complex. GrpE releases ADP from DnaK; ATP binding to DnaK triggers the release of the substrate protein, thus completing the reaction cycle. Several rounds of ATP-dependent interactions between DnaJ, DnaK and GrpE are required for fully efficient folding. The protein is Protein GrpE of Lactobacillus acidophilus (strain ATCC 700396 / NCK56 / N2 / NCFM).